The following is a 461-amino-acid chain: Argininosuccinate lyase (461 aa).

The protein belongs to the lyase 1 family. Argininosuccinate lyase subfamily.

Its subcellular location is the cytoplasm. It catalyses the reaction 2-(N(omega)-L-arginino)succinate = fumarate + L-arginine. Its pathway is amino-acid biosynthesis; L-arginine biosynthesis; L-arginine from L-ornithine and carbamoyl phosphate: step 3/3. This Limosilactobacillus reuteri subsp. reuteri (strain JCM 1112) (Lactobacillus reuteri) protein is Argininosuccinate lyase.